Consider the following 172-residue polypeptide: Neudesin (172 aa).

The signal sequence occupies residues 1–31 (MVGPAPRRRLRPLAALALVLALAPGLPTARA). The Cytochrome b5 heme-binding domain occupies 44–129 (VRLFTEEELA…KELEALDEVF (86 aa)). Residue K136 is modified to N6-acetyllysine. The tract at residues 151–172 (DGSPNLDFKPEDQPHFDIKDEF) is disordered. Over residues 158-172 (FKPEDQPHFDIKDEF) the composition is skewed to basic and acidic residues.

It belongs to the cytochrome b5 family. MAPR subfamily. In terms of assembly, interacts with PINK1 and PARK7. As to expression, ubiquitously expressed with high expression in heart. Over-expressed in various tumors including carcinomas of the uterine cervix, lymphoma, colon, lung, skin and leukemia, as well as carcinoma of the breast.

It localises to the secreted. Its subcellular location is the extracellular space. The protein resides in the mitochondrion. The protein localises to the endoplasmic reticulum. Its function is as follows. Acts as a neurotrophic factor in postnatal mature neurons enhancing neuronal survival. Promotes cell proliferation and neurogenesis in undifferentiated neural progenitor cells at the embryonic stage and inhibits differentiation of astrocytes. Its neurotrophic activity is exerted via MAPK1/ERK2, MAPK3/ERK1 and AKT1/AKT pathways. Neurotrophic activity is enhanced by binding to heme. Also acts as an anorexigenic neurotrophic factor that contributes to energy balance. The protein is Neudesin of Homo sapiens (Human).